A 49-amino-acid polypeptide reads, in one-letter code: Light-harvesting protein B-880 alpha chain (49 aa).

At 1–12 (MYKLWLLFDPRR) the chain is on the cytoplasmic side. A helical transmembrane segment spans residues 13-33 (TLVALSAFLFVLGLIIHFISL). Residue histidine 29 participates in a bacteriochlorophyll binding. Topologically, residues 34 to 49 (STDRFNWLEGKPAVRA) are periplasmic.

This sequence belongs to the antenna complex alpha subunit family. The core complex is formed by different alpha and beta chains, binding bacteriochlorophyll molecules, and arranged most probably in tetrameric structures disposed around the reaction center. The non-pigmented gamma chains may constitute additional components.

The protein resides in the cell inner membrane. Its function is as follows. Antenna complexes are light-harvesting systems, which transfer the excitation energy to the reaction centers. This chain is Light-harvesting protein B-880 alpha chain, found in Rhodoblastus acidophilus (Rhodopseudomonas acidophila).